A 77-amino-acid chain; its full sequence is RNA-binding protein Hfq (77 aa).

One can recognise a Sm domain in the interval 10–70 (DAFLNHVRKT…ISTVMPAQPI (61 aa)).

This sequence belongs to the Hfq family. Homohexamer.

Its function is as follows. RNA chaperone that binds small regulatory RNA (sRNAs) and mRNAs to facilitate mRNA translational regulation in response to envelope stress, environmental stress and changes in metabolite concentrations. Also binds with high specificity to tRNAs. The polypeptide is RNA-binding protein Hfq (Jannaschia sp. (strain CCS1)).